We begin with the raw amino-acid sequence, 412 residues long: Protein MT3510 (412 aa).

N6-(pyridoxal phosphate)lysine is present on Lys227.

The protein belongs to the DegT/DnrJ/EryC1 family.

The chain is Protein MT3510 from Mycobacterium tuberculosis (strain CDC 1551 / Oshkosh).